Here is an 877-residue protein sequence, read N- to C-terminus: Phosphoenolpyruvate carboxylase (877 aa).

Catalysis depends on residues His-138 and Lys-544.

Belongs to the PEPCase type 1 family. Mg(2+) serves as cofactor.

It carries out the reaction oxaloacetate + phosphate = phosphoenolpyruvate + hydrogencarbonate. Functionally, forms oxaloacetate, a four-carbon dicarboxylic acid source for the tricarboxylic acid cycle. The sequence is that of Phosphoenolpyruvate carboxylase from Vibrio parahaemolyticus serotype O3:K6 (strain RIMD 2210633).